Reading from the N-terminus, the 491-residue chain is 2,3-bisphosphoglycerate-independent phosphoglycerate mutase (491 aa).

D11 and S61 together coordinate Mn(2+). Catalysis depends on S61, which acts as the Phosphoserine intermediate. Residues H118, 147–148, R177, R183, 248–251, and K320 each bind substrate; these read RD and RSDR. The Mn(2+) site is built by D386, H390, D427, H428, and H445.

The protein belongs to the BPG-independent phosphoglycerate mutase family. As to quaternary structure, monomer. Requires Mn(2+) as cofactor.

The catalysed reaction is (2R)-2-phosphoglycerate = (2R)-3-phosphoglycerate. It participates in carbohydrate degradation; glycolysis; pyruvate from D-glyceraldehyde 3-phosphate: step 3/5. Catalyzes the interconversion of 2-phosphoglycerate and 3-phosphoglycerate. The sequence is that of 2,3-bisphosphoglycerate-independent phosphoglycerate mutase from Aliarcobacter butzleri (strain RM4018) (Arcobacter butzleri).